A 153-amino-acid polypeptide reads, in one-letter code: Small ribosomal subunit protein uS13 (153 aa).

Belongs to the universal ribosomal protein uS13 family.

The protein localises to the cytoplasm. Functionally, located at the top of the head of the 40S subunit, it contacts several helices of the 18S rRNA. The sequence is that of Small ribosomal subunit protein uS13 (RPS18) from Chlamydomonas reinhardtii (Chlamydomonas smithii).